Reading from the N-terminus, the 333-residue chain is HTH-type transcriptional regulator Cphy_2742 (333 aa).

Residues 1 to 55 (MNIYDVSQKAGVSIATVSRVINGNPNVSEKTKQKVLDVMKEIGYTPNVFARGLGL) enclose the HTH lacI-type domain. A DNA-binding region (H-T-H motif) is located at residues 3-22 (IYDVSQKAGVSIATVSRVIN).

Its subcellular location is the cytoplasm. Its function is as follows. Involved in control of pectin and galacturonic acid metabolism. Probably represses a comprehensive set of pectin fermentation genes by binding a conserved palindrome at or downstream of their transcription start site to block transcription. In the presence of galacturonic acid may activate transcription of acetate synthesis and other aspects of carbon metabolism. In Lachnoclostridium phytofermentans (strain ATCC 700394 / DSM 18823 / ISDg) (Clostridium phytofermentans), this protein is HTH-type transcriptional regulator Cphy_2742.